The sequence spans 289 residues: Transcriptional regulator Rob (289 aa).

The HTH araC/xylS-type domain maps to 8-106 (RDLLIWLEGH…SQTPALYRRS (99 aa)). 2 DNA-binding regions (H-T-H motif) span residues 25–46 (DNVA…KDVT) and 73–96 (ILDI…KKQF).

Its function is as follows. Transcriptional regulator. Represses transcription of genes belonging to the flagellar regulon, including flhD, flhB and fliC; probably thereby leading to repression of motility. Binds to regulatory regions of target genes, including the promoters of the flhDC operon and of P-type ATPase mgtA. Involved in post-transcriptional regulation of expression. Represses expression of the flhDC operon in a post-transcriptional manner. Binds to the right arm of the replication origin oriC of the chromosome. Rob binding may influence the formation of the nucleoprotein structure, required for oriC function in the initiation of replication. This chain is Transcriptional regulator Rob, found in Salmonella typhimurium (strain LT2 / SGSC1412 / ATCC 700720).